Here is a 476-residue protein sequence, read N- to C-terminus: Aspartyl/glutamyl-tRNA(Asn/Gln) amidotransferase subunit B (476 aa).

The protein belongs to the GatB/GatE family. GatB subfamily. As to quaternary structure, heterotrimer of A, B and C subunits.

The enzyme catalyses L-glutamyl-tRNA(Gln) + L-glutamine + ATP + H2O = L-glutaminyl-tRNA(Gln) + L-glutamate + ADP + phosphate + H(+). It carries out the reaction L-aspartyl-tRNA(Asn) + L-glutamine + ATP + H2O = L-asparaginyl-tRNA(Asn) + L-glutamate + ADP + phosphate + 2 H(+). Functionally, allows the formation of correctly charged Asn-tRNA(Asn) or Gln-tRNA(Gln) through the transamidation of misacylated Asp-tRNA(Asn) or Glu-tRNA(Gln) in organisms which lack either or both of asparaginyl-tRNA or glutaminyl-tRNA synthetases. The reaction takes place in the presence of glutamine and ATP through an activated phospho-Asp-tRNA(Asn) or phospho-Glu-tRNA(Gln). This chain is Aspartyl/glutamyl-tRNA(Asn/Gln) amidotransferase subunit B, found in Neisseria meningitidis serogroup C (strain 053442).